The following is a 220-amino-acid chain: Octanoyltransferase (220 aa).

The BPL/LPL catalytic domain occupies 27-208; the sequence is PGTADEIWLC…QLARAHGQAV (182 aa). Residues 66 to 73, 139 to 141, and 152 to 154 each bind substrate; these read RGGQVTYH, ALG, and GLA. C170 functions as the Acyl-thioester intermediate in the catalytic mechanism.

Belongs to the LipB family.

The protein resides in the cytoplasm. It catalyses the reaction octanoyl-[ACP] + L-lysyl-[protein] = N(6)-octanoyl-L-lysyl-[protein] + holo-[ACP] + H(+). Its pathway is protein modification; protein lipoylation via endogenous pathway; protein N(6)-(lipoyl)lysine from octanoyl-[acyl-carrier-protein]: step 1/2. Functionally, catalyzes the transfer of endogenously produced octanoic acid from octanoyl-acyl-carrier-protein onto the lipoyl domains of lipoate-dependent enzymes. Lipoyl-ACP can also act as a substrate although octanoyl-ACP is likely to be the physiological substrate. This Bordetella bronchiseptica (strain ATCC BAA-588 / NCTC 13252 / RB50) (Alcaligenes bronchisepticus) protein is Octanoyltransferase.